We begin with the raw amino-acid sequence, 359 residues long: DNA polymerase IV (359 aa).

The UmuC domain maps to 4 to 184 (IVHVDMDAFY…LKVNRIPGVG (181 aa)). Positions 8 and 102 each coordinate Mg(2+). Residue E103 is part of the active site.

It belongs to the DNA polymerase type-Y family. In terms of assembly, monomer. Mg(2+) serves as cofactor.

The protein localises to the cytoplasm. The catalysed reaction is DNA(n) + a 2'-deoxyribonucleoside 5'-triphosphate = DNA(n+1) + diphosphate. Functionally, poorly processive, error-prone DNA polymerase involved in untargeted mutagenesis. Copies undamaged DNA at stalled replication forks, which arise in vivo from mismatched or misaligned primer ends. These misaligned primers can be extended by PolIV. Exhibits no 3'-5' exonuclease (proofreading) activity. May be involved in translesional synthesis, in conjunction with the beta clamp from PolIII. The sequence is that of DNA polymerase IV from Xanthomonas euvesicatoria pv. vesicatoria (strain 85-10) (Xanthomonas campestris pv. vesicatoria).